Here is a 359-residue protein sequence, read N- to C-terminus: Phospho-N-acetylmuramoyl-pentapeptide-transferase (359 aa).

The next 10 membrane-spanning stretches (helical) occupy residues Ile27–Trp47, Thr73–Leu93, Thr94–Val114, Leu134–Tyr154, Phe166–Ser186, Gly197–Ala217, Gly233–Trp253, Leu261–Leu281, Leu286–Val306, and Lys336–Leu356.

This sequence belongs to the glycosyltransferase 4 family. MraY subfamily. Mg(2+) is required as a cofactor.

The protein resides in the cell inner membrane. It carries out the reaction UDP-N-acetyl-alpha-D-muramoyl-L-alanyl-gamma-D-glutamyl-meso-2,6-diaminopimeloyl-D-alanyl-D-alanine + di-trans,octa-cis-undecaprenyl phosphate = di-trans,octa-cis-undecaprenyl diphospho-N-acetyl-alpha-D-muramoyl-L-alanyl-D-glutamyl-meso-2,6-diaminopimeloyl-D-alanyl-D-alanine + UMP. It participates in cell wall biogenesis; peptidoglycan biosynthesis. In terms of biological role, catalyzes the initial step of the lipid cycle reactions in the biosynthesis of the cell wall peptidoglycan: transfers peptidoglycan precursor phospho-MurNAc-pentapeptide from UDP-MurNAc-pentapeptide onto the lipid carrier undecaprenyl phosphate, yielding undecaprenyl-pyrophosphoryl-MurNAc-pentapeptide, known as lipid I. The sequence is that of Phospho-N-acetylmuramoyl-pentapeptide-transferase from Maridesulfovibrio salexigens (strain ATCC 14822 / DSM 2638 / NCIMB 8403 / VKM B-1763) (Desulfovibrio salexigens).